Consider the following 371-residue polypeptide: Probable L-aspartate decarboxylase (371 aa).

N6-(pyridoxal phosphate)lysine is present on Lys-232.

The protein belongs to the group II decarboxylase family. MfnA subfamily. The cofactor is pyridoxal 5'-phosphate.

The enzyme catalyses L-aspartate + H(+) = beta-alanine + CO2. The protein operates within cofactor biosynthesis; coenzyme A biosynthesis. In terms of biological role, catalyzes the decarboxylation of L-aspartate to produce beta-alanine. The chain is Probable L-aspartate decarboxylase from Pyrococcus furiosus (strain ATCC 43587 / DSM 3638 / JCM 8422 / Vc1).